We begin with the raw amino-acid sequence, 1391 residues long: CAP-Gly domain-containing linker protein 1 (1391 aa).

The interval 1 to 53 (MSMLKPSGLKAPTKILKPGSTALKTPAAAAAPVEKTIPSEKASGPPSSETQEE) is disordered. Serine 48 carries the phosphoserine modification. Threonine 50 is modified (phosphothreonine). The region spanning 78–120 (GETQFAPGQWAGIVLDEPIGKNDGSVAGVRYFQCEPLKGIFTR) is the CAP-Gly 1 domain. An important for tubulin binding region spans residues 97–101 (GKNDG). A disordered region spans residues 129-182 (QAEDEANGLQAAPGRTASPLSTAAATMVSSSPATPSNIPHKPSQSTAKEPSATP). Serine 146 carries the phosphoserine modification. A compositionally biased stretch (polar residues) spans 146-182 (SPLSTAAATMVSSSPATPSNIPHKPSQSTAKEPSATP). A Phosphothreonine modification is found at threonine 181. Phosphoserine is present on residues serine 194, serine 196, serine 199, and serine 203. The CAP-Gly 2 domain maps to 231–273 (GETDFAKGEWCGVELDEPLGKNDGAVAGTRYFQCQPKYGLFAP). Low complexity predominate over residues 302-331 (TPASLKRSPSASSLSSMSSVASSVSSKPSR). A disordered region spans residues 302-336 (TPASLKRSPSASSLSSMSSVASSVSSKPSRTGLLT). Position 309 is a phosphoserine (serine 309). Serine 311 is modified (phosphoserine; by PKA). A phosphoserine mark is found at serine 314, serine 347, and serine 1189. Residues 349 to 1306 (TTALQEALKE…VEMMSEAALN (958 aa)) adopt a coiled-coil conformation. The interval 1251–1272 (KRQLSSSSGNTDAQAEEDERAQ) is disordered. Serine 1317 is subject to Phosphoserine. The segment at 1370–1387 (PYCEICEMFGHWATNCND) adopts a CCHC-type zinc-finger fold.

As to quaternary structure, interacts with MTOR; phosphorylates and regulates CLIP1. Interacts (via CAP-Gly domains) with tubulin. Interacts with SLAIN2. Interacts with TUBA1B, MAPRE1 and MAPRE3. Interacts (via zinc finger) with DCTN1. Binds preferentially to tyrosinated microtubules, and only marginally to detyrosinated microtubules. Phosphorylated. Phosphorylation induces conformational changes by increasing the affinity of the N-terminus for C-terminus, resulting in inhibition of its function thus decreasing its binding to microtubules and DCTN1. Exhibits a folded, autoinhibited conformation when phosphorylated and an open conformation when dephosphorylated with increased binding affinity to microtubules and DCTN1. Phosphorylation regulates its recruitment to tyrosinated microtubules and the recruitment of vesicular cargo to microtubules in neurons. Phosphorylation by MTOR may positively regulate CLIP1 association with microtubules. Expressed in the testes (at protein level).

It localises to the cytoplasm. Its subcellular location is the cytoskeleton. The protein resides in the cytoplasmic vesicle membrane. It is found in the cell projection. The protein localises to the ruffle. Binds to the plus end of microtubules and regulates the dynamics of the microtubule cytoskeleton. Promotes microtubule growth and microtubule bundling. Links cytoplasmic vesicles to microtubules and thereby plays an important role in intracellular vesicle trafficking. Plays a role macropinocytosis and endosome trafficking. The protein is CAP-Gly domain-containing linker protein 1 (Clip1) of Mus musculus (Mouse).